A 231-amino-acid chain; its full sequence is Thiamine import ATP-binding protein ThiQ (231 aa).

The ABC transporter domain maps to 2 to 230 (LRLEDLDIRK…PPPALRGYLG (229 aa)). Residue 32-39 (GPSGAGKS) participates in ATP binding.

The protein belongs to the ABC transporter superfamily. Thiamine importer (TC 3.A.1.19.1) family. In terms of assembly, the complex is composed of two ATP-binding proteins (ThiQ), two transmembrane proteins (ThiP) and a solute-binding protein (ThiB).

Its subcellular location is the cell inner membrane. It catalyses the reaction thiamine(out) + ATP + H2O = thiamine(in) + ADP + phosphate + H(+). Its function is as follows. Part of the ABC transporter complex ThiBPQ involved in thiamine import. Responsible for energy coupling to the transport system. This Ruegeria sp. (strain TM1040) (Silicibacter sp.) protein is Thiamine import ATP-binding protein ThiQ.